The sequence spans 388 residues: Acetate kinase (388 aa).

N7 provides a ligand contact to Mg(2+). K14 provides a ligand contact to ATP. Position 76 (R76) interacts with substrate. The Proton donor/acceptor role is filled by D133. Residues 193 to 197 (HLGNG), 267 to 269 (DMR), and 315 to 319 (GIGEN) contribute to the ATP site. E374 is a Mg(2+) binding site.

Belongs to the acetokinase family. As to quaternary structure, homodimer. Mg(2+) serves as cofactor. Mn(2+) is required as a cofactor.

The protein resides in the cytoplasm. It catalyses the reaction acetate + ATP = acetyl phosphate + ADP. It functions in the pathway metabolic intermediate biosynthesis; acetyl-CoA biosynthesis; acetyl-CoA from acetate: step 1/2. Functionally, catalyzes the formation of acetyl phosphate from acetate and ATP. Can also catalyze the reverse reaction. The polypeptide is Acetate kinase (Micrococcus luteus (strain ATCC 4698 / DSM 20030 / JCM 1464 / CCM 169 / CCUG 5858 / IAM 1056 / NBRC 3333 / NCIMB 9278 / NCTC 2665 / VKM Ac-2230) (Micrococcus lysodeikticus)).